Consider the following 624-residue polypeptide: MQPDPRPSGAGACCRFLPLQSQCPEGAGDAVMYASTECKAEVTPSQHGNRTFSYTLEDHTKQAFGIMNELRLSQQLCDVTLQVKYQDAPAAQFMAHKVVLASSSPVFKAMFTNGLREQGMEVVSIEGIHPKVMERLIEFAYTASISMGEKCVLHVMNGAVMYQIDSVVRACSDFLVQQLDPSNAIGIANFAEQIGCVELHQRAREYIYMHFGEVAKQEEFFNLSHCQLVTLISRDDLNVRCESEVFHACINWVKYDCEQRRFYVQALLRAVRCHSLTPNFLQMQLQKCEILQSDSRCKDYLVKIFEELTLHKPTQVMPCRAPKVGRLIYTAGGYFRQSLSYLEAYNPSDGTWLRLADLQVPRSGLAGCVVGGLLYAVGGRNNSPDGNTDSSALDCYNPMTNQWSPCAPMSVPRNRIGVGVIDGHIYAVGGSHGCIHHNSVERYEPERDEWHLVAPMLTRRIGVGVAVLNRLLYAVGGFDGTNRLNSAECYYPERNEWRMITAMNTIRSGAGVCVLHNCIYAAGGYDGQDQLNSVERYDVETETWTFVAPMKHRRSALGITVHQGRIYVLGGYDGHTFLDSVECYDPDTDTWSEVTRMTSGRSGVGVAVTMEPCRKQIDQQNCTC.

Cys-38 bears the S-(2-succinyl)cysteine mark. Positions 77 to 149 (CDVTLQVKYQ…AYTASISMGE (73 aa)) constitute a BTB domain. Arg-135 participates in a covalent cross-link: N5-[4-(S-L-cysteinyl)-5-methyl-1H-imidazol-2-yl]-L-ornithine (Arg-Cys) (interchain with C-151 in KEAP1). An S-(2,3-dicarboxypropyl)cysteine; alternate modification is found at Cys-151. The residue at position 151 (Cys-151) is an S-(2-succinyl)cysteine; alternate. Residue Cys-151 is modified to S-nitrosocysteine; alternate. Cys-151 is covalently cross-linked (N5-[4-(S-L-cysteinyl)-5-methyl-1H-imidazol-2-yl]-L-ornithine (Cys-Arg) (interchain with R-135 in KEAP1)). Residues 184-286 (AIGIANFAEQ…TPNFLQMQLQ (103 aa)) form the BACK domain. Residue Cys-241 is modified to S-(2-succinyl)cysteine. 2 positions are modified to S-(2,3-dicarboxypropyl)cysteine: Cys-257 and Cys-273. Cys-288 bears the S-(2,3-dicarboxypropyl)cysteine; alternate mark. Cys-288 is modified (S-(2-succinyl)cysteine; alternate). Cys-319 is modified (S-(2-succinyl)cysteine). 6 Kelch repeats span residues 327–372 (LIYT…VVGG), 373–423 (LLYA…VIDG), 424–470 (HIYA…VLNR), 471–517 (LLYA…VLHN), 518–564 (CIYA…VHQG), and 565–611 (RIYV…VTME). At Cys-434 the chain carries S-cGMP-cysteine. Cys-613 is subject to S-(2-succinyl)cysteine.

This sequence belongs to the KEAP1 family. Component of the BCR(KEAP1) E3 ubiquitin ligase complex, at least composed of 2 molecules of CUL3, 2 molecules of KEAP1, and RBX1. Interacts with NFE2L2/NRF2; the interaction is direct. Forms a ternary complex with NFE2L2/NRF2 and PGAM5. Interacts with (phosphorylated) SQSTM1/p62; the interaction is direct and inactivates the BCR(KEAP1) complex by sequestering it in inclusion bodies, promoting its degradation. Interacts with NFE2L1. Interacts with BPTF and PTMA. Interacts with MAP1LC3B. Interacts indirectly with ENC1. Interacts with SESN1 and SESN2. Interacts with HSP90AA1 and HSP90AB1. Interacts with PGCKA1; this interaction prevents the ubiquitination of KEAP1 by TRIM25, thus protecting KEAP1 from degradation. In terms of assembly, (Microbial infection) Interacts with ebolavirus protein VP24; this interaction activates transcription factor NFE2L2/NRF2 by blocking its interaction with KEAP1. Post-translationally, non-enzymatic covalent modifications of reactive cysteines by electrophile metabolites inactivate the BCR(KEAP1) complex. Accumulation of fumarate promotes the formation of cysteine S-succination (S-(2-succinyl)cysteine), leading to inactivate the BCR(KEAP1) complex and promote NFE2L2/NRF2 nuclear accumulation and activation. Nitric oxide-dependent 8-Nitro-cGMP formation promotes cysteine guanylation (S-cGMP-cysteine), leading to NFE2L2/NRF2 nuclear accumulation and activation. Itaconate, an anti-inflammatory metabolite generated in response to lipopolysaccharide, alkylates cysteines, activating NFE2L2/NRF2. Methylglyoxal, a reactive metabolite that accumulates when the glycolytic enzyme PGK1 is inhibited, promotes formation of a methylimidazole cross-link between proximal Cys-151 and Arg-135 on another KEAP1 molecule, resulting in an inactive dimer that inactivates the BCR(KEAP1) complex. In terms of processing, degraded via a proteasomal-independent process during selective autophagy: interaction with phosphorylated SQSTM1/p62 sequesters KEAP1 in inclusion bodies, leading to its degradation. Auto-ubiquitinated by the BCR(KEAP1) complex. Quinone-induced oxidative stress, but not sulforaphane, increases its ubiquitination. Ubiquitination and subsequent degradation is most pronounced following prolonged exposure of cells to oxidative stress, particularly in glutathione-deficient cells that are highly susceptible to oxidative stress. Deubiquitinated by USP25; leading to stabilization. Ubiquitinated by TRIM25; leading to degradation upon ER stress. As to expression, broadly expressed, with highest levels in skeletal muscle.

Its subcellular location is the cytoplasm. The protein resides in the nucleus. It functions in the pathway protein modification; protein ubiquitination. Ubiquitin ligase activity of the BCR(KEAP1) complex is inhibited by oxidative stress and electrophile metabolites such as sulforaphane. Electrophile metabolites react with reactive cysteine residues in KEAP1 and trigger non-enzymatic covalent modifications of these cysteine residues, leading to inactivate the ubiquitin ligase activity of the BCR(KEAP1) complex. Selective autophagy also inactivates the BCR(KEAP1) complex via interaction between KEAP1 and SQSTM1/p62, which sequesters the complex in inclusion bodies and promotes its degradation. Functionally, substrate-specific adapter of a BCR (BTB-CUL3-RBX1) E3 ubiquitin ligase complex that regulates the response to oxidative stress by targeting NFE2L2/NRF2 for ubiquitination. KEAP1 acts as a key sensor of oxidative and electrophilic stress: in normal conditions, the BCR(KEAP1) complex mediates ubiquitination and degradation of NFE2L2/NRF2, a transcription factor regulating expression of many cytoprotective genes. In response to oxidative stress, different electrophile metabolites trigger non-enzymatic covalent modifications of highly reactive cysteine residues in KEAP1, leading to inactivate the ubiquitin ligase activity of the BCR(KEAP1) complex, promoting NFE2L2/NRF2 nuclear accumulation and expression of phase II detoxifying enzymes. In response to selective autophagy, KEAP1 is sequestered in inclusion bodies following its interaction with SQSTM1/p62, leading to inactivation of the BCR(KEAP1) complex and activation of NFE2L2/NRF2. The BCR(KEAP1) complex also mediates ubiquitination of SQSTM1/p62, increasing SQSTM1/p62 sequestering activity and degradation. The BCR(KEAP1) complex also targets BPTF and PGAM5 for ubiquitination and degradation by the proteasome. This Homo sapiens (Human) protein is Kelch-like ECH-associated protein 1.